A 300-amino-acid chain; its full sequence is F-box protein SKIP1 (300 aa).

Residues 11-52 (LAPEILINIISRLTIQELWTGPMFVQKSWLTVCRDPYLWSIF) enclose the F-box; degenerate domain.

In terms of assembly, part of a SCF (ASK-cullin-F-box) protein ligase complex. Interacts with SKP1A/ASK1 and SKP1B/ASK2.

It localises to the nucleus. The protein operates within protein modification; protein ubiquitination. Component of SCF(ASK-cullin-F-box) E3 ubiquitin ligase complexes, which may mediate the ubiquitination and subsequent proteasomal degradation of target proteins. This chain is F-box protein SKIP1 (SKIP1), found in Arabidopsis thaliana (Mouse-ear cress).